Here is a 180-residue protein sequence, read N- to C-terminus: ATP-dependent protease subunit HslV (180 aa).

Residue Thr9 is part of the active site. Positions 164, 167, and 170 each coordinate Na(+).

The protein belongs to the peptidase T1B family. HslV subfamily. A double ring-shaped homohexamer of HslV is capped on each side by a ring-shaped HslU homohexamer. The assembly of the HslU/HslV complex is dependent on binding of ATP.

The protein localises to the cytoplasm. It carries out the reaction ATP-dependent cleavage of peptide bonds with broad specificity.. Its activity is regulated as follows. Allosterically activated by HslU binding. Its function is as follows. Protease subunit of a proteasome-like degradation complex believed to be a general protein degrading machinery. This is ATP-dependent protease subunit HslV from Leptospira borgpetersenii serovar Hardjo-bovis (strain JB197).